Reading from the N-terminus, the 551-residue chain is Glucans biosynthesis protein D (551 aa).

The segment at residues M1–A32 is a signal peptide (tat-type signal).

It belongs to the OpgD/OpgG family. In terms of processing, predicted to be exported by the Tat system. The position of the signal peptide cleavage has not been experimentally proven.

The protein resides in the periplasm. It functions in the pathway glycan metabolism; osmoregulated periplasmic glucan (OPG) biosynthesis. Functionally, probably involved in the control of the structural glucose backbone of osmoregulated periplasmic glucans (OPGs). The sequence is that of Glucans biosynthesis protein D from Escherichia coli O1:K1 / APEC.